We begin with the raw amino-acid sequence, 400 residues long: MSKLILAINAGSSSLKFQLIRMPEEELVTKGLIERIGLKDSIFTIEVNGEKVKTVQDIKDHVEAVDIMLDAFKAHNIINDINDIDGTGHRVVHGGEKFPESVAITDEVEKEIEELSELAPLHNPANLMGIRAFRKLLPNIPHVAIFDTAFHQTMPEKAYLYSLPYHYYKDYGIRKYGFHGTSHKFVSQRAAEMLDKPVEDLRIISCHIGNGASIAAIDGGKSIDTSMGFTPLAGVTMGTRSGNIDPALIPFIMEKTGKTAEQVLEILNKESGLLGLSGTSSDLRDLSEEAESGKARSQMALDVFASKIHKYIGSYAARMHGVDVIVFTAGIGENSVEIRAKVLEGLEFMGVYWDPKKNENLLRGKEGFINYPHSPVKVVVIPTDEESMIARDVMTFGGLK.

A Mg(2+)-binding site is contributed by N9. An ATP-binding site is contributed by K16. R90 provides a ligand contact to substrate. D147 serves as the catalytic Proton donor/acceptor. ATP contacts are provided by residues 207–211 (HIGNG), 282–284 (DLR), and 330–334 (GIGEN). E385 lines the Mg(2+) pocket.

It belongs to the acetokinase family. In terms of assembly, homodimer. Mg(2+) serves as cofactor. Requires Mn(2+) as cofactor.

It localises to the cytoplasm. The catalysed reaction is acetate + ATP = acetyl phosphate + ADP. Its pathway is metabolic intermediate biosynthesis; acetyl-CoA biosynthesis; acetyl-CoA from acetate: step 1/2. Catalyzes the formation of acetyl phosphate from acetate and ATP. Can also catalyze the reverse reaction. This chain is Acetate kinase, found in Staphylococcus aureus (strain JH1).